Consider the following 148-residue polypeptide: Puroindoline-A (148 aa).

The signal sequence occupies residues 1 to 19; it reads MKALFLIGLLALVASTAFA. Residues 20–28 constitute a propeptide that is removed on maturation; sequence QYSEVVGSY. The propeptide at 147–148 is removed in mature form; that stretch reads YW.

In terms of processing, five disulfide bonds are present. Endosperm and aleurone layer of developing kernels. In the aleurone layer, mainly localized to starch granules and the surface of the plasma membrane, forming a uniform layer, also abundant in the intercellular space. In the endosperm, mainly localized to starch granules and the plasma membrane, but less abundant in the intercellular space. Not found in roots or coleoptiles.

Its subcellular location is the membrane. The protein localises to the secreted. It is found in the extracellular space. In terms of biological role, acts as a membranotoxin, probably through its antibacterial and antifungal activities, contributing to the defense mechanism of the plant against predators. Forms monovalent cation-selective ion channels in membranes. Has antibacterial activity against the Gram-positive bacteria S.aureus and C.michiganensis, and the Gram-negative bacteria E.coli, P.syringae pv phaseoli, A.tumefaciens and E.carotovora subsp carotovora. Acts synergistically with PINB against bacteria. Contributes to grain texture and hardness. This is Puroindoline-A (PINA) from Triticum aestivum (Wheat).